A 471-amino-acid chain; its full sequence is Tryptophanase (471 aa).

Residues Lys5, Lys115, and Lys156 each carry the N6-acetyllysine modification. Lys270 carries the post-translational modification N6-(pyridoxal phosphate)lysine. Lys450 is modified (N6-acetyllysine).

Belongs to the beta-eliminating lyase family. Homotetramer. Pyridoxal 5'-phosphate is required as a cofactor.

It catalyses the reaction L-tryptophan + H2O = indole + pyruvate + NH4(+). It participates in amino-acid degradation; L-tryptophan degradation via pyruvate pathway; indole and pyruvate from L-tryptophan: step 1/1. The protein is Tryptophanase of Escherichia coli O6:H1 (strain CFT073 / ATCC 700928 / UPEC).